A 463-amino-acid chain; its full sequence is Glutamyl-tRNA reductase (463 aa).

Substrate is bound by residues 49-52, S109, 114-116, and Q120; these read TCNR and EQQ. The active-site Nucleophile is the C50. 196 to 201 serves as a coordination point for NADP(+); it reads GAGAMS.

Belongs to the glutamyl-tRNA reductase family. Homodimer.

The catalysed reaction is (S)-4-amino-5-oxopentanoate + tRNA(Glu) + NADP(+) = L-glutamyl-tRNA(Glu) + NADPH + H(+). The protein operates within porphyrin-containing compound metabolism; protoporphyrin-IX biosynthesis; 5-aminolevulinate from L-glutamyl-tRNA(Glu): step 1/2. Catalyzes the NADPH-dependent reduction of glutamyl-tRNA(Glu) to glutamate 1-semialdehyde (GSA). The sequence is that of Glutamyl-tRNA reductase from Corynebacterium glutamicum (strain ATCC 13032 / DSM 20300 / JCM 1318 / BCRC 11384 / CCUG 27702 / LMG 3730 / NBRC 12168 / NCIMB 10025 / NRRL B-2784 / 534).